Reading from the N-terminus, the 245-residue chain is MDKNELVQKAKLAEQAERYDDMAACMKSVTEQGAELSNEERNLLSVAYKNVVGARRSSWRVVSSIEQKTEGAEKKQQMAREYREKIETELRDICNDVLSLLEKFLIPNRSQPESKVFYLKMKGDYYRYLAEVAAGDDKKGIVDQSQQAYQEAFEISKKEMQPTHPIRLGLALNFSVFYYEILNSPEKACSLAKTAFDEAIAELDTLSEESYKDSTLIMQLLRDNLTLWTSDTQGDEAEAGEGGEN.

The residue at position 1 (methionine 1) is an N-acetylmethionine. N6-acetyllysine is present on lysine 3. Serine 58 is subject to Phosphoserine; by PKA. Lysine 68 carries the post-translational modification N6-acetyllysine. 3 positions are modified to phosphoserine: serine 184, serine 207, and serine 210. Threonine 232 carries the post-translational modification Phosphothreonine; by CK1.

The protein belongs to the 14-3-3 family. In terms of assembly, interacts with CDK16 and BSPRY. Interacts with WEE1 (C-terminal). Interacts with SAMSN1. Interacts with MLF1 (phosphorylated form); the interaction retains it in the cytoplasm. Interacts with Thr-phosphorylated ITGB2. Interacts with BCL2L11. Homodimer. Heterodimerizes with YWHAE. Homo- and heterodimerization is inhibited by phosphorylation on Ser-58. Interacts with FOXO4, NOXA1, SSH1 and ARHGEF2. Interacts with Pseudomonas aeruginosa exoS (unphosphorylated form). Interacts with BAX; the interaction occurs in the cytoplasm. Under stress conditions, MAPK8-mediated phosphorylation releases BAX to mitochondria. Interacts with phosphorylated RAF1; the interaction is inhibited when YWHAZ is phosphorylated on Thr-232. Interacts with TP53; the interaction enhances p53 transcriptional activity. The Ser-58 phosphorylated form inhibits this interaction and p53 transcriptional activity. Interacts with ABL1 (phosphorylated form); the interaction retains ABL1 in the cytoplasm. Interacts with PKA-phosphorylated AANAT; the interaction modulates AANAT enzymatic activity by increasing affinity for arylalkylamines and acetyl-CoA and protecting the enzyme from dephosphorylation and proteasomal degradation. It may also prevent thiol-dependent inactivation. Interacts with AKT1; the interaction phosphorylates YWHAZ and modulates dimerization. Interacts with GAB2 and TLK2. Interacts with the 'Thr-369' phosphorylated form of DAPK2. Interacts with PI4KB, TBC1D22A and TBC1D22B. Interacts with ZFP36L1 (via phosphorylated form); this interaction occurs in a p38 MAPK- and AKT-signaling pathways. Interacts with SLITRK1. Interacts with AK5, LDB1, MADD, MARK3, PDE1A and SMARCB1. Interacts with YWHAZ. Interacts with MEFV. Interacts with ADAM22 (via C-terminus). The delta, brain-specific form differs from the zeta form in being phosphorylated. Phosphorylation on Ser-184 by MAPK8; promotes dissociation of BAX and translocation of BAX to mitochondria. Phosphorylation on Thr-232; inhibits binding of RAF1. Phosphorylated on Ser-58 by PKA and protein kinase C delta type catalytic subunit in a sphingosine-dependent fashion. Phosphorylation on Ser-58 by PKA; disrupts homodimerization and heterodimerization with YHAE and TP53. In terms of tissue distribution, highly expressed in brain (at protein level).

It is found in the cytoplasm. The protein localises to the melanosome. Functionally, adapter protein implicated in the regulation of a large spectrum of both general and specialized signaling pathways. Binds to a large number of partners, usually by recognition of a phosphoserine or phosphothreonine motif. Binding generally results in the modulation of the activity of the binding partner. Promotes cytosolic retention and inactivation of TFEB transcription factor by binding to phosphorylated TFEB. Induces ARHGEF7 activity on RAC1 as well as lamellipodia and membrane ruffle formation. In neurons, regulates spine maturation through the modulation of ARHGEF7 activity. The chain is 14-3-3 protein zeta/delta (YWHAZ) from Ovis aries (Sheep).